We begin with the raw amino-acid sequence, 363 residues long: Trichothecene biosynthesis protein 14 (363 aa).

It belongs to the TRI14 family.

Part of the gene cluster that mediates the production of the antimicrobial trichothecene harzianum A (HA) that plays a role in Botrytis cinerea antagonistic activity and plant defense priming. The biosynthesis of harzianum A begins with the cyclization of farnesyl diphosphate to trichodiene and is catalyzed by the trichodiene synthase TRI5. Trichodiene undergoes a series of oxygenations catalyzed by the cytochrome P450 monooxygenase TRI4. TRI4 controls the addition of 3 oxygens at C-2, C-11, and the C-12, C-13-epoxide to form the intermediate isotrichodiol. Isotrichodiol then undergoes a non-enzymatic isomerization and cyclization to form 12,13-epoxytrichothec-9-ene (EPT) which is further converted to trichodermol by the cytochrome P450 monooxygenase TRI11 via C-4 hydroxylation. The last step of HA synthesis is esterification of an octatriendioyl moiety to the C-4 oxygen of trichodermol. The octatriendioyl moiety is probably produced by the polyketide synthase TRI17 and the esterification performed by the trichothecene O-acetyltransferase TRI3. In Trichoderma arundinaceum, this protein is Trichothecene biosynthesis protein 14.